Consider the following 66-residue polypeptide: Large ribosomal subunit protein bL35 (66 aa).

Basic residues predominate over residues 1-26 (MPKMKTHRGAAKRVKRTGSGKLKRSR). The interval 1 to 49 (MPKMKTHRGAAKRVKRTGSGKLKRSRAFTSHLFANKSTKQKRKLRKASL) is disordered.

Belongs to the bacterial ribosomal protein bL35 family.

In Staphylococcus saprophyticus subsp. saprophyticus (strain ATCC 15305 / DSM 20229 / NCIMB 8711 / NCTC 7292 / S-41), this protein is Large ribosomal subunit protein bL35.